A 430-amino-acid polypeptide reads, in one-letter code: Adenylosuccinate synthetase (430 aa).

Residues 12 to 18 and 40 to 42 contribute to the GTP site; these read GDEGKGK and GHT. The active-site Proton acceptor is Asp13. Mg(2+)-binding residues include Asp13 and Gly40. Residues 13-16, 38-41, Thr128, Arg142, Gln223, Thr238, and Arg302 each bind IMP; these read DEGK and NAGH. His41 (proton donor) is an active-site residue. A substrate-binding site is contributed by 298–304; sequence TTTGRPR. GTP-binding positions include Arg304, 330 to 332, and 412 to 414; these read SID and SVG.

Belongs to the adenylosuccinate synthetase family. In terms of assembly, homodimer. The cofactor is Mg(2+).

It localises to the cytoplasm. It catalyses the reaction IMP + L-aspartate + GTP = N(6)-(1,2-dicarboxyethyl)-AMP + GDP + phosphate + 2 H(+). It participates in purine metabolism; AMP biosynthesis via de novo pathway; AMP from IMP: step 1/2. Its function is as follows. Plays an important role in the de novo pathway of purine nucleotide biosynthesis. Catalyzes the first committed step in the biosynthesis of AMP from IMP. The chain is Adenylosuccinate synthetase from Streptococcus pyogenes serotype M49 (strain NZ131).